A 278-amino-acid polypeptide reads, in one-letter code: Dermonecrotic toxin LlSicTox-alphaIII3ii (278 aa).

Residue His-5 is part of the active site. 2 residues coordinate Mg(2+): Glu-25 and Asp-27. His-40 acts as the Nucleophile in catalysis. Cys-44 and Cys-50 form a disulfide bridge. Asp-84 is a binding site for Mg(2+).

Belongs to the arthropod phospholipase D family. Class I subfamily. It depends on Mg(2+) as a cofactor. Expressed by the venom gland.

It localises to the secreted. The catalysed reaction is an N-(acyl)-sphingosylphosphocholine = an N-(acyl)-sphingosyl-1,3-cyclic phosphate + choline. It carries out the reaction an N-(acyl)-sphingosylphosphoethanolamine = an N-(acyl)-sphingosyl-1,3-cyclic phosphate + ethanolamine. The enzyme catalyses a 1-acyl-sn-glycero-3-phosphocholine = a 1-acyl-sn-glycero-2,3-cyclic phosphate + choline. It catalyses the reaction a 1-acyl-sn-glycero-3-phosphoethanolamine = a 1-acyl-sn-glycero-2,3-cyclic phosphate + ethanolamine. Dermonecrotic toxins cleave the phosphodiester linkage between the phosphate and headgroup of certain phospholipids (sphingolipid and lysolipid substrates), forming an alcohol (often choline) and a cyclic phosphate. This toxin acts on sphingomyelin (SM). It may also act on ceramide phosphoethanolamine (CPE), lysophosphatidylcholine (LPC) and lysophosphatidylethanolamine (LPE), but not on lysophosphatidylserine (LPS), and lysophosphatidylglycerol (LPG). It acts by transphosphatidylation, releasing exclusively cyclic phosphate products as second products. Induces dermonecrosis, hemolysis, increased vascular permeability, edema, inflammatory response, and platelet aggregation. This is Dermonecrotic toxin LlSicTox-alphaIII3ii from Loxosceles laeta (South American recluse spider).